A 297-amino-acid chain; its full sequence is Light-independent protochlorophyllide reductase iron-sulfur ATP-binding protein (297 aa).

Residues Gly41 to Thr46 and Lys70 contribute to the ATP site. Residue Ser45 coordinates Mg(2+). Residues Cys126 and Cys160 each coordinate [4Fe-4S] cluster. Residues Asn211–Arg212 and Pro235–Leu237 contribute to the ATP site.

This sequence belongs to the NifH/BchL/ChlL family. In terms of assembly, homodimer. Protochlorophyllide reductase is composed of three subunits; BchL, BchN and BchB. The cofactor is [4Fe-4S] cluster.

It catalyses the reaction chlorophyllide a + oxidized 2[4Fe-4S]-[ferredoxin] + 2 ADP + 2 phosphate = protochlorophyllide a + reduced 2[4Fe-4S]-[ferredoxin] + 2 ATP + 2 H2O. It functions in the pathway porphyrin-containing compound metabolism; bacteriochlorophyll biosynthesis (light-independent). Component of the dark-operative protochlorophyllide reductase (DPOR) that uses Mg-ATP and reduced ferredoxin to reduce ring D of protochlorophyllide (Pchlide) to form chlorophyllide a (Chlide). This reaction is light-independent. The L component serves as a unique electron donor to the NB-component of the complex, and binds Mg-ATP. The chain is Light-independent protochlorophyllide reductase iron-sulfur ATP-binding protein from Methylorubrum extorquens (strain CM4 / NCIMB 13688) (Methylobacterium extorquens).